We begin with the raw amino-acid sequence, 390 residues long: NADH-quinone oxidoreductase subunit D (390 aa).

This sequence belongs to the complex I 49 kDa subunit family. NDH-1 is composed of 14 different subunits. Subunits NuoB, C, D, E, F, and G constitute the peripheral sector of the complex.

Its subcellular location is the cell membrane. The catalysed reaction is a quinone + NADH + 5 H(+)(in) = a quinol + NAD(+) + 4 H(+)(out). NDH-1 shuttles electrons from NADH, via FMN and iron-sulfur (Fe-S) centers, to quinones in the respiratory chain. The immediate electron acceptor for the enzyme in this species is believed to be ubiquinone. Couples the redox reaction to proton translocation (for every two electrons transferred, four hydrogen ions are translocated across the cytoplasmic membrane), and thus conserves the redox energy in a proton gradient. This Wolbachia pipientis wMel protein is NADH-quinone oxidoreductase subunit D.